The sequence spans 144 residues: Probable transcription termination protein NusA (144 aa).

The region spanning 101 to 144 (RTDIVVGVKPEEIGKVIGKEGKNIKLFKDAVSRYFNVNSISVKQ) is the KH domain.

This sequence belongs to the NusA family.

It localises to the cytoplasm. In terms of biological role, participates in transcription termination. The polypeptide is Probable transcription termination protein NusA (Thermoplasma acidophilum (strain ATCC 25905 / DSM 1728 / JCM 9062 / NBRC 15155 / AMRC-C165)).